A 139-amino-acid polypeptide reads, in one-letter code: Large ribosomal subunit protein uL16 (139 aa).

The segment covering 1 to 17 (MLIPRRTKHRKQHHPRR) has biased composition (basic residues). A disordered region spans residues 1 to 24 (MLIPRRTKHRKQHHPRRTGAASGG).

The protein belongs to the universal ribosomal protein uL16 family. Part of the 50S ribosomal subunit.

Its function is as follows. Binds 23S rRNA and is also seen to make contacts with the A and possibly P site tRNAs. The sequence is that of Large ribosomal subunit protein uL16 from Beutenbergia cavernae (strain ATCC BAA-8 / DSM 12333 / CCUG 43141 / JCM 11478 / NBRC 16432 / NCIMB 13614 / HKI 0122).